Here is a 695-residue protein sequence, read N- to C-terminus: Solute carrier family 53 member 1 (695 aa).

Residues 1–228 (MKFAEHLSAH…RVPPLGAAQP (228 aa)) lie on the Cytoplasmic side of the membrane. One can recognise an SPX domain in the interval 2-224 (KFAEHLSAHI…MKRLRVPPLG (223 aa)). An important for inositol polyphosphate binding region spans residues 158–165 (KILKKHDK). The chain crosses the membrane as a helical span at residues 229–259 (APAWTTFRVGLFCGIFIVLNITLVFAAVFKL). At 260–264 (ETDRT) the chain is on the extracellular side. Residues 265 to 296 (VWPLIRIYRGGFLLIEFLFLLGINTYGWRQAG) traverse the membrane as a helical segment. Residues 297 to 309 (VNHVLIFELNPRN) lie on the Cytoplasmic side of the membrane. The helical transmembrane segment at 310–337 (NLSHQHLFEIAGFLGILWCLSLLACFFA) threads the bilayer. The Extracellular segment spans residues 338–343 (PISIIP). The helical transmembrane segment at 344-365 (IYVYPLALYGFMVFFLINPTKT) threads the bilayer. The segment at residues 366–383 (FYYKSRFWLLKLLFRVFT) is an intramembrane region (helical). Residues 384 to 388 (APFHK) lie on the Cytoplasmic side of the membrane. The chain crosses the membrane as a discontinuously helical span at residues 389 to 422 (VGFADFWLADQLNSLSVILMDLEYMICFYSFELK). Phosphate contacts are provided by D398 and N401. Residues 423–429 (WDESKGL) lie on the Extracellular side of the membrane. The discontinuously helical transmembrane segment at 430 to 471 (LPNDPQEPEFCHKYSYGVRAIVQCIPAWLRFIQCLRRYRDTR) threads the bilayer. The EXS domain maps to 439–642 (FCHKYSYGVR…LNADDQTLLE (204 aa)). A topological domain (cytoplasmic) is located at residue R472. A helical membrane pass occupies residues 473–503 (AFPHLVNAGKYSTTFFTVTFAALYSTHEEQN). The phosphate site is built by K482 and Y483. The Extracellular portion of the chain corresponds to 504–506 (HSD). A helical transmembrane segment spans residues 507 to 534 (TVVFFYLWVFFCIISSCYTLIWDLKMDW). Residues 535 to 553 (GLFDKNAGENTFLREEIVY) are Cytoplasmic-facing. The discontinuously helical transmembrane segment at 554–584 (PQKAYYYCAIIEDVILRFAWTIQISITATFK) threads the bilayer. R570 is a phosphate binding site. Topologically, residues 585–586 (PH) are extracellular. The chain crosses the membrane as a helical span at residues 587–625 (VGNIIATVFAPLEVFRRFVWNFFRLENEHLNNCGEFRAV). Positions 602 and 603 each coordinate phosphate. Residues 626–695 (RDISVAPLNA…IEDTDDEANT (70 aa)) are Cytoplasmic-facing. S667 carries the post-translational modification Phosphoserine. Positions 671–695 (PRLASQSKARDTKVLIEDTDDEANT) are disordered. At T689 the chain carries Phosphothreonine.

The protein belongs to the SYG1 (TC 2.A.94) family. In terms of assembly, homodimer. As to expression, expressed in pancreatic islets.

It is found in the cell membrane. The catalysed reaction is phosphate(in) = phosphate(out). Functionally, inorganic ion transporter that mediates phosphate ion export across plasma membrane. Plays a major role in phosphate homeostasis, preventing intracellular phosphate accumulation and possible calcium phosphate precipitation, ultimately preserving calcium signaling. Binds inositol hexakisphosphate (Ins6P) and similar inositol polyphosphates, such as 5-diphospho-inositol pentakisphosphate (5-InsP7), which are important intracellular signaling molecules involved in regulation of phosphate flux. In terms of biological role, (Microbial infection) Receptor for xenotropic and polytropic murine leukemia (X- and P-MLV) retroviruses. Confers susceptibility to X- or P-MLV infection in vitro. This is Solute carrier family 53 member 1 from Mus musculus (Mouse).